Here is a 402-residue protein sequence, read N- to C-terminus: Digeranylgeranylglycerophospholipid reductase (402 aa).

Residues glycine 15, glutamate 34, cysteine 45, alanine 46, glycine 48, arginine 99, alanine 123, aspartate 280, glycine 292, and isoleucine 293 each coordinate FAD.

It belongs to the geranylgeranyl reductase family. DGGGPL reductase subfamily. Requires FAD as cofactor.

It catalyses the reaction a 2,3-bis-O-phytanyl-sn-glycerol 1-phospholipid + 8 oxidized 2[4Fe-4S]-[ferredoxin] = a 2,3-bis-O-(geranylgeranyl)-sn-glycerol 1-phospholipid + 8 reduced 2[4Fe-4S]-[ferredoxin] + 16 H(+). It carries out the reaction 2,3-bis-O-(phytanyl)-sn-glycerol 1-phosphate + 8 oxidized 2[4Fe-4S]-[ferredoxin] = 2,3-bis-O-(geranylgeranyl)-sn-glycerol 1-phosphate + 8 reduced 2[4Fe-4S]-[ferredoxin] + 16 H(+). The enzyme catalyses a 2,3-bis-O-phytanyl-sn-glycerol 1-phospholipid + 8 A = a 2,3-bis-O-(geranylgeranyl)-sn-glycerol 1-phospholipid + 8 AH2. The catalysed reaction is CDP-2,3-bis-O-(geranylgeranyl)-sn-glycerol + 8 AH2 = CDP-2,3-bis-O-(phytanyl)-sn-glycerol + 8 A. It catalyses the reaction archaetidylserine + 8 AH2 = 2,3-bis-O-phytanyl-sn-glycero-3-phospho-L-serine + 8 A. It participates in membrane lipid metabolism; glycerophospholipid metabolism. Its function is as follows. Is involved in the reduction of 2,3-digeranylgeranylglycerophospholipids (unsaturated archaeols) into 2,3-diphytanylglycerophospholipids (saturated archaeols) in the biosynthesis of archaeal membrane lipids. Catalyzes the formation of archaetidic acid (2,3-di-O-phytanyl-sn-glyceryl phosphate) from 2,3-di-O-geranylgeranylglyceryl phosphate (DGGGP) via the hydrogenation of each double bond of the isoprenoid chains. Is also probably able to reduce double bonds of geranyl groups in CDP-2,3-bis-O-(geranylgeranyl)-sn-glycerol and archaetidylserine, thus acting at various stages in the biosynthesis of archaeal membrane lipids. This chain is Digeranylgeranylglycerophospholipid reductase, found in Methanospirillum hungatei JF-1 (strain ATCC 27890 / DSM 864 / NBRC 100397 / JF-1).